Reading from the N-terminus, the 393-residue chain is Chorismate synthase (393 aa).

Arg-39 and Arg-45 together coordinate NADP(+). Residues 133–135 (RSS), 256–257 (NA), Gly-301, 316–320 (KPIPT), and Arg-342 each bind FMN.

It belongs to the chorismate synthase family. As to quaternary structure, homotetramer. The cofactor is FMNH2.

It catalyses the reaction 5-O-(1-carboxyvinyl)-3-phosphoshikimate = chorismate + phosphate. The protein operates within metabolic intermediate biosynthesis; chorismate biosynthesis; chorismate from D-erythrose 4-phosphate and phosphoenolpyruvate: step 7/7. Functionally, catalyzes the anti-1,4-elimination of the C-3 phosphate and the C-6 proR hydrogen from 5-enolpyruvylshikimate-3-phosphate (EPSP) to yield chorismate, which is the branch point compound that serves as the starting substrate for the three terminal pathways of aromatic amino acid biosynthesis. This reaction introduces a second double bond into the aromatic ring system. The chain is Chorismate synthase from Lysinibacillus sphaericus (strain C3-41).